The following is a 231-amino-acid chain: Sec-independent protein translocase protein TatB (231 aa).

A helical membrane pass occupies residues 1 to 21; that stretch reads MFDIGFSELLLFGVIALIVLG. The segment at 77–168 is disordered; sequence MRREMAEMRG…SLKTDFNDNA (92 aa). Residues 101 to 111 are compositionally biased toward basic and acidic residues; it reads ASRDLVDDAKP. The segment covering 148–157 has biased composition (polar residues); sequence SEQPSAQGDN.

Belongs to the TatB family. The Tat system comprises two distinct complexes: a TatABC complex, containing multiple copies of TatA, TatB and TatC subunits, and a separate TatA complex, containing only TatA subunits. Substrates initially bind to the TatABC complex, which probably triggers association of the separate TatA complex to form the active translocon.

The protein resides in the cell inner membrane. Its function is as follows. Part of the twin-arginine translocation (Tat) system that transports large folded proteins containing a characteristic twin-arginine motif in their signal peptide across membranes. Together with TatC, TatB is part of a receptor directly interacting with Tat signal peptides. TatB may form an oligomeric binding site that transiently accommodates folded Tat precursor proteins before their translocation. The polypeptide is Sec-independent protein translocase protein TatB (Psychrobacter cryohalolentis (strain ATCC BAA-1226 / DSM 17306 / VKM B-2378 / K5)).